A 532-amino-acid polypeptide reads, in one-letter code: Probable NAD kinase 1 (532 aa).

The span at 1–26 shows a compositional bias: basic and acidic residues; the sequence is MSLDELPHKVSDERVNHDTVTSHESE. The interval 1 to 32 is disordered; that stretch reads MSLDELPHKVSDERVNHDTVTSHESEIGSGSI.

This sequence belongs to the NAD kinase family.

The catalysed reaction is NAD(+) + ATP = ADP + NADP(+) + H(+). This Oryza sativa subsp. japonica (Rice) protein is Probable NAD kinase 1.